Reading from the N-terminus, the 102-residue chain is Large ribosomal subunit protein bL21 (102 aa).

This sequence belongs to the bacterial ribosomal protein bL21 family. Part of the 50S ribosomal subunit. Contacts protein L20.

This protein binds to 23S rRNA in the presence of protein L20. The polypeptide is Large ribosomal subunit protein bL21 (Myxococcus xanthus (strain DK1622)).